We begin with the raw amino-acid sequence, 427 residues long: Glutamate-1-semialdehyde 2,1-aminomutase (427 aa).

Position 265 is an N6-(pyridoxal phosphate)lysine (Lys265).

Belongs to the class-III pyridoxal-phosphate-dependent aminotransferase family. HemL subfamily. Homodimer. The cofactor is pyridoxal 5'-phosphate.

It localises to the cytoplasm. The catalysed reaction is (S)-4-amino-5-oxopentanoate = 5-aminolevulinate. It functions in the pathway porphyrin-containing compound metabolism; protoporphyrin-IX biosynthesis; 5-aminolevulinate from L-glutamyl-tRNA(Glu): step 2/2. The protein is Glutamate-1-semialdehyde 2,1-aminomutase of Bordetella bronchiseptica (strain ATCC BAA-588 / NCTC 13252 / RB50) (Alcaligenes bronchisepticus).